The following is a 451-amino-acid chain: Chromosomal replication initiator protein DnaA (451 aa).

Residues 1–77 (MTENEQIFWN…EVYNAQISVD (77 aa)) form a domain I, interacts with DnaA modulators region. The tract at residues 77–110 (DYVFEEDLMIEQNQTKINQKPKQQALNSLPTVTS) is domain II. Positions 111 to 329 (DLNSKYSFEN…GALKDISLVA (219 aa)) are domain III, AAA+ region. Glycine 155, glycine 157, lysine 158, and threonine 159 together coordinate ATP. The tract at residues 330–451 (NFKQIDTITV…EIETIKNKIK (122 aa)) is domain IV, binds dsDNA.

Belongs to the DnaA family. Oligomerizes as a right-handed, spiral filament on DNA at oriC.

It localises to the cytoplasm. Its function is as follows. Plays an essential role in the initiation and regulation of chromosomal replication. ATP-DnaA binds to the origin of replication (oriC) to initiate formation of the DNA replication initiation complex once per cell cycle. Binds the DnaA box (a 9 base pair repeat at the origin) and separates the double-stranded (ds)DNA. Forms a right-handed helical filament on oriC DNA; dsDNA binds to the exterior of the filament while single-stranded (ss)DNA is stabiized in the filament's interior. The ATP-DnaA-oriC complex binds and stabilizes one strand of the AT-rich DNA unwinding element (DUE), permitting loading of DNA polymerase. After initiation quickly degrades to an ADP-DnaA complex that is not apt for DNA replication. Binds acidic phospholipids. In terms of biological role, the half-life of ATP-DnaA is 12 minutes at 37 degrees Celsius, in E.coli the half-life is about 41 minutes. The polypeptide is Chromosomal replication initiator protein DnaA (Streptococcus pyogenes serotype M1).